We begin with the raw amino-acid sequence, 99 residues long: Large ribosomal subunit protein uL23 (99 aa).

The protein belongs to the universal ribosomal protein uL23 family. In terms of assembly, part of the 50S ribosomal subunit. Contacts protein L29, and trigger factor when it is bound to the ribosome.

Functionally, one of the early assembly proteins it binds 23S rRNA. One of the proteins that surrounds the polypeptide exit tunnel on the outside of the ribosome. Forms the main docking site for trigger factor binding to the ribosome. This chain is Large ribosomal subunit protein uL23, found in Shewanella loihica (strain ATCC BAA-1088 / PV-4).